We begin with the raw amino-acid sequence, 147 residues long: Peptide deformylase 1 (147 aa).

Positions 90 and 132 each coordinate Fe cation. Glutamate 133 is an active-site residue. Histidine 136 provides a ligand contact to Fe cation.

It belongs to the polypeptide deformylase family. The cofactor is Fe(2+).

The enzyme catalyses N-terminal N-formyl-L-methionyl-[peptide] + H2O = N-terminal L-methionyl-[peptide] + formate. In terms of biological role, removes the formyl group from the N-terminal Met of newly synthesized proteins. Requires at least a dipeptide for an efficient rate of reaction. N-terminal L-methionine is a prerequisite for activity but the enzyme has broad specificity at other positions. This Clostridium perfringens (strain 13 / Type A) protein is Peptide deformylase 1.